The chain runs to 152 residues: Large ribosomal subunit protein uL22 (152 aa).

Positions Ala-124–Ala-143 are enriched in low complexity. The disordered stretch occupies residues Ala-124–Glu-152.

This sequence belongs to the universal ribosomal protein uL22 family. Part of the 50S ribosomal subunit.

This protein binds specifically to 23S rRNA; its binding is stimulated by other ribosomal proteins, e.g. L4, L17, and L20. It is important during the early stages of 50S assembly. It makes multiple contacts with different domains of the 23S rRNA in the assembled 50S subunit and ribosome. Its function is as follows. The globular domain of the protein is located near the polypeptide exit tunnel on the outside of the subunit, while an extended beta-hairpin is found that lines the wall of the exit tunnel in the center of the 70S ribosome. The chain is Large ribosomal subunit protein uL22 from Salinispora arenicola (strain CNS-205).